Here is a 100-residue protein sequence, read N- to C-terminus: Urease subunit gamma (100 aa).

It belongs to the urease gamma subunit family. Heterotrimer of UreA (gamma), UreB (beta) and UreC (alpha) subunits. Three heterotrimers associate to form the active enzyme.

Its subcellular location is the cytoplasm. It catalyses the reaction urea + 2 H2O + H(+) = hydrogencarbonate + 2 NH4(+). Its pathway is nitrogen metabolism; urea degradation; CO(2) and NH(3) from urea (urease route): step 1/1. This is Urease subunit gamma from Yersinia rohdei.